Consider the following 122-residue polypeptide: UPF0738 protein YjbL (122 aa).

This sequence belongs to the UPF0738 family.

The protein is UPF0738 protein YjbL (yjbL) of Bacillus subtilis (strain 168).